Consider the following 226-residue polypeptide: MTMNMFEQFMSPELLMIPTALLSMLVPVLLIHHNPKLLGNRMTTAIAWLLMTIMSNMTNQLTPSGQKWCQVLTSLLLMILLSNLLGLLPYTFTSTSQLSMNMAMAIPLWMATIITGMTKKPSITLAHMLPEGSPTPLIPFMIIIETISLLMRPLALGVRLTANITAGHLLMTMVSTTTLNFITSHITLSIMTYLLLFLLCILELAVACIQAYVFVLLIILYLQENT.

7 helical membrane passes run 11 to 31 (SPELLMIPTALLSMLVPVLLI), 37 to 54 (LLGNRMTTAIAWLLMTIM), 72 to 92 (LTSLLLMILLSNLLGLLPYTF), 98 to 118 (LSMNMAMAIPLWMATIITGMT), 138 to 158 (IPFMIIIETISLLMRPLALGV), 178 to 198 (TLNFITSHITLSIMTYLLLFL), and 199 to 219 (LCILELAVACIQAYVFVLLII).

The protein belongs to the ATPase A chain family. In terms of assembly, component of the ATP synthase complex composed at least of ATP5F1A/subunit alpha, ATP5F1B/subunit beta, ATP5MC1/subunit c (homooctomer), MT-ATP6/subunit a, MT-ATP8/subunit 8, ATP5ME/subunit e, ATP5MF/subunit f, ATP5MG/subunit g, ATP5MK/subunit k, ATP5MJ/subunit j, ATP5F1C/subunit gamma, ATP5F1D/subunit delta, ATP5F1E/subunit epsilon, ATP5PF/subunit F6, ATP5PB/subunit b, ATP5PD/subunit d, ATP5PO/subunit OSCP. ATP synthase complex consists of a soluble F(1) head domain (subunits alpha(3) and beta(3)) - the catalytic core - and a membrane F(0) domain - the membrane proton channel (subunits c, a, 8, e, f, g, k and j). These two domains are linked by a central stalk (subunits gamma, delta, and epsilon) rotating inside the F1 region and a stationary peripheral stalk (subunits F6, b, d, and OSCP). Interacts with DNAJC30; interaction is direct.

The protein localises to the mitochondrion inner membrane. It carries out the reaction H(+)(in) = H(+)(out). In terms of biological role, subunit a, of the mitochondrial membrane ATP synthase complex (F(1)F(0) ATP synthase or Complex V) that produces ATP from ADP in the presence of a proton gradient across the membrane which is generated by electron transport complexes of the respiratory chain. ATP synthase complex consist of a soluble F(1) head domain - the catalytic core - and a membrane F(1) domain - the membrane proton channel. These two domains are linked by a central stalk rotating inside the F(1) region and a stationary peripheral stalk. During catalysis, ATP synthesis in the catalytic domain of F(1) is coupled via a rotary mechanism of the central stalk subunits to proton translocation. With the subunit c (ATP5MC1), forms the proton-conducting channel in the F(0) domain, that contains two crucial half-channels (inlet and outlet) that facilitate proton movement from the mitochondrial intermembrane space (IMS) into the matrix. Protons are taken up via the inlet half-channel and released through the outlet half-channel, following a Grotthuss mechanism. This chain is ATP synthase F(0) complex subunit a, found in Lycodon semicarinatus (Ryukyu odd-tooth snake).